The chain runs to 718 residues: Polyribonucleotide nucleotidyltransferase (718 aa).

Aspartate 487 and aspartate 493 together coordinate Mg(2+). The KH domain maps to 554–613; the sequence is PRIETFKIPTDKIREVIGTGGKVIREIVEKTGAKVNIEDDGTVKVASSDGESIKAAIKWI. Residues 623 to 691 enclose the S1 motif domain; it reads GEIYEGTVVK…DRGKTRLSMK (69 aa). The tract at residues 692–718 is disordered; the sequence is VVDQETGEDLEAKQKAEGDAPREAAGE. Positions 701 to 718 are enriched in basic and acidic residues; it reads LEAKQKAEGDAPREAAGE.

Belongs to the polyribonucleotide nucleotidyltransferase family. Mg(2+) is required as a cofactor.

It is found in the cytoplasm. It catalyses the reaction RNA(n+1) + phosphate = RNA(n) + a ribonucleoside 5'-diphosphate. Functionally, involved in mRNA degradation. Catalyzes the phosphorolysis of single-stranded polyribonucleotides processively in the 3'- to 5'-direction. This chain is Polyribonucleotide nucleotidyltransferase, found in Nitrobacter winogradskyi (strain ATCC 25391 / DSM 10237 / CIP 104748 / NCIMB 11846 / Nb-255).